An 85-amino-acid chain; its full sequence is Anti-neuroexcitation peptide 2 (85 aa).

The signal sequence occupies residues Met1–Ala21. The LCN-type CS-alpha/beta domain maps to Asp22 to Gly82. Intrachain disulfides connect Cys31–Cys81, Cys35–Cys56, Cys42–Cys63, and Cys46–Cys65.

Belongs to the long (4 C-C) scorpion toxin superfamily. Sodium channel inhibitor family. Beta subfamily. Expressed by the venom gland.

The protein resides in the secreted. Functionally, binds to sodium channels (Nav) and inhibits them. Recombinant ANEP delays the convulsion seizure of insect models by 18% and shows anti-neuroexcitatory activity. This chain is Anti-neuroexcitation peptide 2, found in Olivierus martensii (Manchurian scorpion).